Consider the following 279-residue polypeptide: Probable cyclic nucleotide phosphodiesterase Psyc_2036 (279 aa).

Positions 23, 25, 70, 100, 179, 218, and 220 each coordinate Fe cation. Residues His-25, Asp-70, and 100-101 each bind AMP; that span reads NH. AMP is bound at residue His-220.

Belongs to the cyclic nucleotide phosphodiesterase class-III family. It depends on Fe(2+) as a cofactor.

The polypeptide is Probable cyclic nucleotide phosphodiesterase Psyc_2036 (Psychrobacter arcticus (strain DSM 17307 / VKM B-2377 / 273-4)).